The following is a 116-amino-acid chain: Aspartate 1-decarboxylase (116 aa).

Ser-25 serves as the catalytic Schiff-base intermediate with substrate; via pyruvic acid. Ser-25 is modified (pyruvic acid (Ser)). Thr-57 contributes to the substrate binding site. Tyr-58 serves as the catalytic Proton donor. 73–75 (GAA) is a binding site for substrate.

This sequence belongs to the PanD family. Heterooctamer of four alpha and four beta subunits. Pyruvate is required as a cofactor. Post-translationally, is synthesized initially as an inactive proenzyme, which is activated by self-cleavage at a specific serine bond to produce a beta-subunit with a hydroxyl group at its C-terminus and an alpha-subunit with a pyruvoyl group at its N-terminus.

It is found in the cytoplasm. It catalyses the reaction L-aspartate + H(+) = beta-alanine + CO2. It participates in cofactor biosynthesis; (R)-pantothenate biosynthesis; beta-alanine from L-aspartate: step 1/1. Its function is as follows. Catalyzes the pyruvoyl-dependent decarboxylation of aspartate to produce beta-alanine. This chain is Aspartate 1-decarboxylase, found in Phocaeicola vulgatus (strain ATCC 8482 / DSM 1447 / JCM 5826 / CCUG 4940 / NBRC 14291 / NCTC 11154) (Bacteroides vulgatus).